A 330-amino-acid chain; its full sequence is Basic leucine zipper 2 (330 aa).

Residues 1–207 (MAQLPPKIPT…NRQSAQRSRV (207 aa)) are disordered. Over residues 21 to 34 (GHHHHAAHGHHHQR) the composition is skewed to basic residues. The segment covering 45 to 56 (PLPPFPLPPPAP) has biased composition (pro residues). Low complexity-rich tracts occupy residues 57-72 (ANGGAQQQQQQQQHQP) and 139-151 (QPAAPAASASSPS). Residues 155–166 (SMNDEKQDKGET) are compositionally biased toward basic and acidic residues. The bZIP domain occupies 188 to 244 (DPKRVKRILANRQSAQRSRVRKLQYISELERSVTSLQTEVSALSPRVAFLDHQRSLL). Positions 190–209 (KRVKRILANRQSAQRSRVRK) are basic motif. Positions 216 to 244 (LERSVTSLQTEVSALSPRVAFLDHQRSLL) are leucine-zipper. Residues 267 to 330 (GGTEEGDREA…LVIGRDPDAL (64 aa)) form a disordered region.

In terms of tissue distribution, expressed in roots, shoots and panicles.

The protein resides in the nucleus. Its function is as follows. Transcription regulator. In Oryza sativa subsp. japonica (Rice), this protein is Basic leucine zipper 2 (BZIP02).